The primary structure comprises 222 residues: ATP-dependent dethiobiotin synthetase BioD (222 aa).

Residue 12-17 participates in ATP binding; sequence DVGKTF. Thr16 provides a ligand contact to Mg(2+). Residue Lys37 is part of the active site. Ser41 contributes to the substrate binding site. ATP is bound by residues Asp54 and 113 to 116; that span reads EGAG. 2 residues coordinate Mg(2+): Asp54 and Glu113.

This sequence belongs to the dethiobiotin synthetase family. Homodimer. Mg(2+) serves as cofactor.

Its subcellular location is the cytoplasm. It carries out the reaction (7R,8S)-7,8-diammoniononanoate + CO2 + ATP = (4R,5S)-dethiobiotin + ADP + phosphate + 3 H(+). The protein operates within cofactor biosynthesis; biotin biosynthesis; biotin from 7,8-diaminononanoate: step 1/2. Functionally, catalyzes a mechanistically unusual reaction, the ATP-dependent insertion of CO2 between the N7 and N8 nitrogen atoms of 7,8-diaminopelargonic acid (DAPA, also called 7,8-diammoniononanoate) to form a ureido ring. The protein is ATP-dependent dethiobiotin synthetase BioD of Anoxybacillus flavithermus (strain DSM 21510 / WK1).